A 3291-amino-acid polypeptide reads, in one-letter code: Protocadherin-16 (3291 aa).

The signal sequence occupies residues 1 to 35 (MQKELSVALSCPGMKSLRTLLPLLVLLGATVPGSW). Residues 36-2933 (GQAGSLDLQI…PDLNLLLVGA (2898 aa)) are Extracellular-facing. 27 Cadherin domains span residues 37–137 (QAGS…APAF), 138–249 (PQAR…APAF), 250–356 (NQSR…QPSM), 369–466 (VSEA…APAF), 476–572 (LPEV…EPQF), 573–679 (QRTF…PPQF), 680–784 (YPRE…PPIF), 785–888 (EQLQ…SPAF), 889–994 (PAPE…APRF), 995–1105 (DSPT…EPTF), 1100–1205 (SEEP…SPTF), 1218–1317 (IQVP…SPDL), 1326–1429 (VPVV…APTF), 1430–1539 (ARDP…APVF), 1539–1642 (FASP…APAF), 1643–1744 (PQQE…TPTF), 1745–1848 (GNTH…APVF), 1849–1953 (PVPS…APAF), 1976–2061 (LATL…GPRF), 2062–2164 (PRTS…APRF), 2165–2270 (LRPH…RPTI), 2270–2369 (IPQP…VPTF), 2370–2475 (SQSL…APSF), 2476–2595 (TLPH…PPVF), 2596–2699 (TRAS…GPAF), 2700–2806 (PLSL…DPVF), and 2807–2926 (LAPS…APDL). A glycan (N-linked (GlcNAc...) asparagine) is linked at Asn-396. A glycan (N-linked (GlcNAc...) asparagine) is linked at Asn-2354. A disordered region spans residues 2867 to 2886 (SRAPGSGTTTSGGGGRTRRE). Residues 2934 to 2954 (VAASLGVVVVLALAALVLGLV) form a helical membrane-spanning segment. At 2955 to 3291 (RARSRKAEAA…EPPDDTELRI (337 aa)) the chain is on the cytoplasmic side. Positions 2978 to 3033 (SLQKLGREPPSPPPSEHLYHQTLPSYGGPGAGGPYPRGGSLDPSHSSGRGSAEAAE) are disordered. Residues 3004 to 3013 (GGPGAGGPYP) show a composition bias toward gly residues. At Ser-3048 the chain carries Phosphoserine. Disordered stretches follow at residues 3051–3081 (SSLA…APDT) and 3226–3291 (ASHR…ELRI). Low complexity predominate over residues 3237 to 3259 (SLSSAAMSPSFSPSLSPLAARSP). Polar residues predominate over residues 3270–3279 (PSASALSTES).

As to quaternary structure, heterophilic interaction with FAT4; this interaction affects their respective protein levels. As to expression, expressed in the epicardium and atrioventricular sulcus (at protein level).

The protein resides in the cell membrane. Calcium-dependent cell-adhesion protein. Mediates functions in neuroprogenitor cell proliferation and differentiation. In the heart, has a critical role for proper morphogenesis of the mitral valve, acting in the regulation of cell migration involved in valve formation. The polypeptide is Protocadherin-16 (Dchs1) (Mus musculus (Mouse)).